Reading from the N-terminus, the 310-residue chain is MNLVFGMIASIGELLIDLISVEEGDLKDVRLFEKHPGGAPANVAVGVSRLGVKSSLISKVGNDPFGEYLIEELSKENVDTRGIVKDEKKHTGIVFVQLKGASPSFLLYDDVAYFNMTLNDINWDIVEEAKIVNFGSVILARNPSRETVMKVIKKIKGSSLIAFDVNLRLDLWRGQEEEMIKVLEESIKLADIVKASEEEVLYLENQGVEVKGSMLTAITLGPKGCRLIKNETVVDVPSYNVNPLDTTGAGDAFMAALLVGILKLKGLDLLKLGKFANLVAALSTQKRGAWSTPRKDELLKYKEAREVLAP.

K194, T219, and G224 together coordinate ATP.

The protein belongs to the carbohydrate kinase PfkB family.

In Pyrococcus horikoshii (strain ATCC 700860 / DSM 12428 / JCM 9974 / NBRC 100139 / OT-3), this protein is Putative sugar kinase PH1459.